The sequence spans 330 residues: MESTNKTWTELMTPLSQFWLESSSQAWKNWFDLMAKGGAGAMMGSAPQSFESLPQQFLQSQQFYGELLKLSFEAWQSLWPKLDNGSAPGAVQGYLKQLQTQIEQYTATTQALQGDMDGLWQCYIKEVQRFSQLWLSTWQSSVAPLGKLPTGDIHAWLDLNNLYGDALYNKNLSSFMRSPLLGPSREMNGKLLRAFDDWVKLSQAMADYQLLEADIQYRGFAALMEDLLARAKEDKPVKTWKEFQQRWAIAADQVFEEAFCEEKNLKVRGKFINALNRYRIQQQEILEAWLKMLNLPTRSEVDEIHQTIYQLRKEVKSLKKRLGETEANPG.

Positions 298–328 (RSEVDEIHQTIYQLRKEVKSLKKRLGETEAN) form a coiled coil.

The protein belongs to the PHA/PHB synthase family. Type III PhaE subfamily. Forms a heterodimer with PhaC, which may multimerize in the presence of 3-hydroxybutyryl-CoA. Both subunits are required for PHB synthesis in E.coli and in PHA-negative A.eutrophus.

It is found in the cytoplasm. The protein operates within biopolymer metabolism; poly-(R)-3-hydroxybutanoate biosynthesis. In terms of biological role, when expressed in E.coli with Synechocystis PhaC and C.necator PhaA and PhaB, confers the ability to synthesize up to 13% (w/w) poly(3-hydroxybutyrate) (PHB) depending on the carbon source; all 4 genes are necessary for PHB production. Cell-free in vitro coexpression with PhaE gives a heterodimer able to polymerize 3-hydroxybutyrate-CoA. This subunit has no catalytic activity but enhances the activity of PhaC, the catalytic subunit. This is Poly(3-hydroxyalkanoate) polymerase subunit PhaE from Synechocystis sp. (strain ATCC 27184 / PCC 6803 / Kazusa).